The chain runs to 344 residues: Phenylalanine--tRNA ligase alpha subunit (344 aa).

Glu-256 is a binding site for Mg(2+).

Belongs to the class-II aminoacyl-tRNA synthetase family. Phe-tRNA synthetase alpha subunit type 1 subfamily. As to quaternary structure, tetramer of two alpha and two beta subunits. The cofactor is Mg(2+).

The protein resides in the cytoplasm. It carries out the reaction tRNA(Phe) + L-phenylalanine + ATP = L-phenylalanyl-tRNA(Phe) + AMP + diphosphate + H(+). The chain is Phenylalanine--tRNA ligase alpha subunit from Bacillus cereus (strain G9842).